A 202-amino-acid polypeptide reads, in one-letter code: MRYWYLRLAVFLGALAVPAWWLYQAWIFALGPDPGKTLVDRLGLGALVLLLLTLAMTPLQKLSGWPGWIAVRRQLGLWCFTYVLLHLSAYCVFILGLDWGQLGIELSKRPYIIVGMLGFVCLFLLAITSNRFAMRKLGSRWKKLHRLVYLILGLGLLHMLWVVRADLEEWTLYAVVGASLMLLRLPSIARRLPRLRTRPGVS.

A run of 6 helical transmembrane segments spans residues 8 to 28 (LAVFLGALAVPAWWLYQAWIF), 42 to 62 (LGLGALVLLLLTLAMTPLQKL), 75 to 95 (LGLWCFTYVLLHLSAYCVFIL), 110 to 130 (PYIIVGMLGFVCLFLLAITSN), 147 to 167 (LVYLILGLGLLHMLWVVRADL), and 169 to 189 (EWTLYAVVGASLMLLRLPSIA).

The protein belongs to the MsrQ family. Heterodimer of a catalytic subunit (MsrP) and a heme-binding subunit (MsrQ). FMN serves as cofactor. It depends on heme b as a cofactor.

The protein localises to the cell inner membrane. Part of the MsrPQ system that repairs oxidized periplasmic proteins containing methionine sulfoxide residues (Met-O), using respiratory chain electrons. Thus protects these proteins from oxidative-stress damage caused by reactive species of oxygen and chlorine generated by the host defense mechanisms. MsrPQ is essential for the maintenance of envelope integrity under bleach stress, rescuing a wide series of structurally unrelated periplasmic proteins from methionine oxidation. MsrQ provides electrons for reduction to the reductase catalytic subunit MsrP, using the quinone pool of the respiratory chain. The sequence is that of Protein-methionine-sulfoxide reductase heme-binding subunit MsrQ from Pseudomonas aeruginosa (strain UCBPP-PA14).